The following is a 298-amino-acid chain: UDP-N-acetylenolpyruvoylglucosamine reductase (298 aa).

In terms of domain architecture, FAD-binding PCMH-type spans 26-191; it reads KTGGEAEYLA…LSATFSLTPG (166 aa). Residue R170 is part of the active site. Residue S220 is the Proton donor of the active site. E290 is an active-site residue.

Belongs to the MurB family. The cofactor is FAD.

It localises to the cytoplasm. The enzyme catalyses UDP-N-acetyl-alpha-D-muramate + NADP(+) = UDP-N-acetyl-3-O-(1-carboxyvinyl)-alpha-D-glucosamine + NADPH + H(+). It participates in cell wall biogenesis; peptidoglycan biosynthesis. In terms of biological role, cell wall formation. The sequence is that of UDP-N-acetylenolpyruvoylglucosamine reductase from Lactobacillus helveticus (strain DPC 4571).